The sequence spans 1597 residues: Rho guanine nucleotide exchange factor 5 (1597 aa).

Disordered stretches follow at residues 138–246 (PFSS…EGTL), 258–455 (EEQM…SLEP), and 467–1072 (GSFL…VFRE). Residue S184 is modified to Phosphoserine. A compositionally biased stretch (polar residues) spans 192 to 204 (ETNQNEGSESGTI). Over residues 217-237 (ESQGLLHPQEVQVLEEQGQQE) the composition is skewed to low complexity. Residues 266 to 278 (NDEKGEQKQKQEQ) show a composition bias toward basic and acidic residues. Over residues 299-309 (GLNDGEWEQED) the composition is skewed to acidic residues. 2 stretches are compositionally biased toward basic and acidic residues: residues 323–368 (GEER…KEKG) and 394–404 (RSREEENEHHG). Over residues 428 to 438 (LMTQIPGTQTE) the composition is skewed to polar residues. Phosphoserine occurs at positions 445 and 450. The segment covering 474–490 (SPDKEIDQNSQQEESRL) has biased composition (basic and acidic residues). A compositionally biased stretch (pro residues) spans 512–522 (PRTPDSAPPSP). 2 stretches are compositionally biased toward polar residues: residues 583–601 (STGTSPPRPPANSTGTVQH) and 655–682 (DYSTVSASPTALSTLKQDSQESISNLER). Positions 731–746 (QRRDTHPSVVETDGHA) are enriched in basic and acidic residues. 2 stretches are compositionally biased toward pro residues: residues 812 to 828 (PLPPTPDLPQPHLPPIS) and 838 to 856 (PLPPLPIIDPPTEPPPLPP). An Asymmetric dimethylarginine modification is found at R866. The span at 901–920 (ATARSTESFTSTSRSKSEVS) shows a compositional bias: low complexity. Residues 926–941 (SNMTNFLCPSSPTTPW) show a composition bias toward polar residues. Basic and acidic residues predominate over residues 950–969 (SKDEAGVSEHPEAPAREPLR). Residues S983, S1011, and S1044 each carry the phosphoserine modification. Over residues 990–1012 (QPEKPSHLHLEKASSWPHRRDSG) the composition is skewed to basic and acidic residues. Residues 1057-1072 (AVEKHPGPSDTVVFRE) are compositionally biased toward basic and acidic residues. S1126 is modified (phosphoserine). Residues 1174-1358 (KLQEVKFELI…EQLIRDCNNN (185 aa)) enclose the DH domain. Residues 1390–1502 (WLVKSGELTA…WISALAMPRE (113 aa)) enclose the PH domain. Positions 1510-1571 (YNSPQVQCLR…PVQQVEFISN (62 aa)) constitute an SH3 domain.

In terms of assembly, interacts with SRC. Forms a ternary complex with SRC and the PI3K 85 kDa subunit. Interacts with and is activated by the heterodimer formed by GNB1 and GNG2. Interacts with ODAM (via C-terminus). Interacts with RHOA. Post-translationally, activation of SRC induces tyrosine phosphorylation of ARHGEF5. As to expression, ubiquitously expressed with highest levels in placenta. High levels are also found in colon, kidney, trachea, prostate, liver, pancreas, pituitary gland, thyroid gland and mammary gland. In fetal tissues, expressed at high levels in kidney, lung and liver. Expressed at low levels in lung and heart.

It localises to the cytoplasm. The protein localises to the nucleus. The protein resides in the cell projection. It is found in the podosome. Functionally, guanine nucleotide exchange factor which activates Rho GTPases. Strongly activates RHOA. Also strongly activates RHOB, weakly activates RHOC and RHOG and shows no effect on RHOD, RHOV, RHOQ or RAC1. Involved in regulation of cell shape and actin cytoskeletal organization. Plays a role in actin organization by generating a loss of actin stress fibers and the formation of membrane ruffles and filopodia. Required for SRC-induced podosome formation. Involved in positive regulation of immature dendritic cell migration. This chain is Rho guanine nucleotide exchange factor 5 (ARHGEF5), found in Homo sapiens (Human).